The primary structure comprises 473 residues: 3-isopropylmalate dehydratase large subunit (473 aa).

[4Fe-4S] cluster is bound by residues Cys351, Cys414, and Cys417.

Belongs to the aconitase/IPM isomerase family. LeuC type 1 subfamily. Heterodimer of LeuC and LeuD. It depends on [4Fe-4S] cluster as a cofactor.

It carries out the reaction (2R,3S)-3-isopropylmalate = (2S)-2-isopropylmalate. It participates in amino-acid biosynthesis; L-leucine biosynthesis; L-leucine from 3-methyl-2-oxobutanoate: step 2/4. Its function is as follows. Catalyzes the isomerization between 2-isopropylmalate and 3-isopropylmalate, via the formation of 2-isopropylmaleate. The protein is 3-isopropylmalate dehydratase large subunit of Acidovorax sp. (strain JS42).